Consider the following 251-residue polypeptide: Triosephosphate isomerase (251 aa).

9 to 11 serves as a coordination point for substrate; sequence NWK. H94 (electrophile) is an active-site residue. The active-site Proton acceptor is E166. Substrate contacts are provided by residues G172, S211, and 232 to 233; that span reads GG.

Belongs to the triosephosphate isomerase family. Homodimer.

The protein resides in the cytoplasm. It carries out the reaction D-glyceraldehyde 3-phosphate = dihydroxyacetone phosphate. Its pathway is carbohydrate biosynthesis; gluconeogenesis. The protein operates within carbohydrate degradation; glycolysis; D-glyceraldehyde 3-phosphate from glycerone phosphate: step 1/1. In terms of biological role, involved in the gluconeogenesis. Catalyzes stereospecifically the conversion of dihydroxyacetone phosphate (DHAP) to D-glyceraldehyde-3-phosphate (G3P). The chain is Triosephosphate isomerase from Xanthomonas campestris pv. campestris (strain 8004).